We begin with the raw amino-acid sequence, 115 residues long: Meiotically up-regulated gene 168 protein (115 aa).

Positions 82-115 are disordered; that stretch reads SVSPVHTKAEEPGLGLTPMNSADFSNKIASRYRS. Over residues 99 to 109 the composition is skewed to polar residues; that stretch reads PMNSADFSNKI.

The protein localises to the nucleus. In terms of biological role, has a role in meiosis. The polypeptide is Meiotically up-regulated gene 168 protein (mug168) (Schizosaccharomyces pombe (strain 972 / ATCC 24843) (Fission yeast)).